The primary structure comprises 418 residues: Hydroxysteroid dehydrogenase-like protein 2 (418 aa).

NADP(+) is bound by residues 17 to 23 (GASRGIG), Lys-42, and Asp-74. The residue at position 42 (Lys-42) is an N6-(2-hydroxyisobutyryl)lysine. Lys-116 carries the post-translational modification N6-acetyllysine. Residue Tyr-168 is the Proton acceptor of the active site. Lys-172 contributes to the NADP(+) binding site. Residues 306–415 (RSGAVEETFR…KLEKLMNQMN (110 aa)) enclose the SCP2 domain. N6-succinyllysine is present on Lys-318.

It belongs to the short-chain dehydrogenases/reductases (SDR) family.

It is found in the peroxisome. The protein localises to the mitochondrion. Has apparently no steroid dehydrogenase activity. Controls bile acid (BA) and lipid metabolism in response to nutritional cues. This is Hydroxysteroid dehydrogenase-like protein 2 (HSDL2) from Bos taurus (Bovine).